Reading from the N-terminus, the 340-residue chain is Deubiquitinase SseL (340 aa).

H222 is an active-site residue. The active-site Nucleophile is the C284.

The protein belongs to the peptidase C79 family.

Its subcellular location is the secreted. The protein localises to the host cytoplasm. Effector proteins function to alter host cell physiology and promote bacterial survival in host tissues. This protease targets the host cell ubiquitin pathway by acting as a deubiquitinase in infected host cells. The chain is Deubiquitinase SseL (sseL) from Salmonella arizonae (strain ATCC BAA-731 / CDC346-86 / RSK2980).